Here is a 336-residue protein sequence, read N- to C-terminus: MANQKKVTNKTPKKPSVNFDRTKFYTIEEAVNLAKQTSNAKFLSSIDIAIKLNLDTSKSDQQLRGTVSLPYFFGKEKRILVLDKGLTQKDAKSLGVNHAGDSELIAEISKGWLDFDLIITTPKMMPELSKLGKILGTRGLMPNPKNGNVTTDLPKTIAEFKKGINQYRTDSYGNIHMVVGKANADTAKIVENINFLLSFIAAKRLTSVKGIFIEKVNLSSTMGPGIRVLVNKTAVVKKTAKGKVIADDSAKGENKKPAYLIQRVKYAQKKKPSKHPENPPVITEAKKKKVKKILKKAKPAKKAAVAKKPVVVNKKTATKKSPAKKGDVKKAKTSKK.

Residues 1–245 (MANQKKVTNK…VKKTAKGKVI (245 aa)) form a large ribosomal subunit protein uL1 region. Residues 246–336 (ADDSAKGENK…DVKKAKTSKK (91 aa)) form a unknown region. Positions 267-336 (AQKKKPSKHP…DVKKAKTSKK (70 aa)) are disordered. The segment covering 286–305 (KKKKVKKILKKAKPAKKAAV) has biased composition (basic residues). The segment covering 306-315 (AKKPVVVNKK) has biased composition (low complexity).

This sequence belongs to the universal ribosomal protein uL1 family. In terms of assembly, part of the 50S ribosomal subunit.

Binds directly to 23S rRNA. The L1 stalk is quite mobile in the ribosome, and is involved in E site tRNA release. Its function is as follows. Protein L1 is also a translational repressor protein, it controls the translation of the L11 operon by binding to its mRNA. In Malacoplasma penetrans (strain HF-2) (Mycoplasma penetrans), this protein is Large ribosomal subunit protein uL1.